The following is a 521-amino-acid chain: Probable protein kinase UbiB (521 aa).

Residues 119–497 (QFDETPIASA…QKRTNRLLQT (379 aa)) form the Protein kinase domain. ATP-binding positions include 125-133 (IASASIAQV) and Lys151. The active-site Proton acceptor is Asp286. The chain crosses the membrane as a helical span at residues 496–516 (QTIIYGGIGFVLGLLAMQLLV).

Belongs to the ABC1 family. UbiB subfamily.

It is found in the cell inner membrane. It participates in cofactor biosynthesis; ubiquinone biosynthesis [regulation]. Is probably a protein kinase regulator of UbiI activity which is involved in aerobic coenzyme Q (ubiquinone) biosynthesis. The protein is Probable protein kinase UbiB of Variovorax paradoxus (strain S110).